A 131-amino-acid chain; its full sequence is Protein Turandot M (131 aa).

The signal sequence occupies residues 1-23 (MNPTIYLSCLMVFSVFLLGKVNA).

The protein belongs to the Turandot family.

Its subcellular location is the secreted. A humoral factor that may play a role in stress tolerance. Requires Mekk1 expression in the fat body to regulate response to septic injury and consequent immune response. This Drosophila melanogaster (Fruit fly) protein is Protein Turandot M.